The chain runs to 361 residues: Molybdenum import ATP-binding protein ModC 1 (361 aa).

Positions 1 to 237 (MPADGIRARF…LDLPTAFHED (237 aa)) constitute an ABC transporter domain. Residue 35–42 (GHSGSGKT) coordinates ATP. The region spanning 296–361 (DSSITNVLPA…AQIKAVALLG (66 aa)) is the Mop domain.

This sequence belongs to the ABC transporter superfamily. Molybdate importer (TC 3.A.1.8) family. As to quaternary structure, the complex is composed of two ATP-binding proteins (ModC), two transmembrane proteins (ModB) and a solute-binding protein (ModA).

It localises to the cell inner membrane. It carries out the reaction molybdate(out) + ATP + H2O = molybdate(in) + ADP + phosphate + H(+). Part of the ABC transporter complex ModABC involved in molybdenum import. Responsible for energy coupling to the transport system. In Azotobacter vinelandii, this protein is Molybdenum import ATP-binding protein ModC 1.